Reading from the N-terminus, the 464-residue chain is METEQPEETFPNTETNGEFGKRPAEDMEEEQAFKRSRNTDEMVELRILLQSKNAGAVIGKGGKNIKALRTDYNASVSVPDSSGPERILSISADIETIGEILKKIIPTLEEGLQLPSPTATSQLPLESDAVECLNYQHYKGSDFDCELRLLIHQSLAGGIIGVKGAKIKELRENTQTTIKLFQECCPQSTDRVVLIGGKPDRVVECIKIILDLISESPIKGRAQPYDPNFYDETYDYGGFTMMFDDRRGRPVGFPMRGRGGFDRMPPGRGGRPMPPSRRDYDDMSPRRGPPPPPPGRGGRGGSRARNLPLPPPPPPRGGDLMAYDRRGRPGDRYDGMVGFSADETWDSAIDTWSPSEWQMAYEPQGGSGYDYSYAGGRGSYGDLGGPIITTQVTIPKDLAGSIIGKGGQRIKQIRHESGASIKIDEPLEGSEDRIITITGTQDQIQNAQYLLQNSVKQYADVEGF.

M1 is subject to N-acetylmethionine. The disordered stretch occupies residues 1–37 (METEQPEETFPNTETNGEFGKRPAEDMEEEQAFKRSR). Residues 1–276 (METEQPEETF…GRGGRPMPPS (276 aa)) form a necessary for interaction with DDX1 region. Residues 19–37 (FGKRPAEDMEEEQAFKRSR) are compositionally biased toward basic and acidic residues. K34 is modified (N6-acetyllysine; alternate). K34 participates in a covalent cross-link: Glycyl lysine isopeptide (Lys-Gly) (interchain with G-Cter in SUMO1); alternate. A Glycyl lysine isopeptide (Lys-Gly) (interchain with G-Cter in SUMO2); alternate cross-link involves residue K34. S36 carries the phosphoserine modification. Residue T39 is modified to Phosphothreonine. One can recognise a KH 1 domain in the interval 42–104 (MVELRILLQS…ETIGEILKKI (63 aa)). Glycyl lysine isopeptide (Lys-Gly) (interchain with G-Cter in SUMO2) cross-links involve residues K52 and K60. 2 repeat units span residues 54–76 (AGAVIGKGGKNIKALRTDYNASV) and 59–62 (GKGG). The segment at 54 to 421 (AGAVIGKGGK…QIRHESGASI (368 aa)) is 2 X 22 AA approximate repeats. Residues 59-407 (GKGGKNIKAL…LAGSIIGKGG (349 aa)) are 5 X 4 AA repeats of G-X-G-G. Phosphoserine is present on residues S75 and S116. The KH 2 domain maps to 144 to 209 (DCELRLLIHQ…DRVVECIKII (66 aa)). Residue K163 forms a Glycyl lysine isopeptide (Lys-Gly) (interchain with G-Cter in SUMO1); alternate linkage. K163 participates in a covalent cross-link: Glycyl lysine isopeptide (Lys-Gly) (interchain with G-Cter in SUMO2); alternate. Residue K198 is modified to N6-acetyllysine. An interaction with ZIK1 region spans residues 209-337 (ILDLISESPI…RPGDRYDGMV (129 aa)). S214 and S216 each carry phosphoserine. Residue K219 forms a Glycyl lysine isopeptide (Lys-Gly) (interchain with G-Cter in SUMO2); alternate linkage. The residue at position 219 (K219) is an N6-succinyllysine; alternate. Residues 236–273 (YGGFTMMFDDRRGRPVGFPMRGRGGFDRMPPGRGGRPM) are RNA-binding RGG-box. 3 repeat units span residues 245–250 (DRRGRP), 257–260 (GRGG), and 267–270 (GRGG). The tract at residues 245–329 (DRRGRPVGFP…LMAYDRRGRP (85 aa)) is 2 X 6 AA approximate repeats. A disordered region spans residues 250–329 (PVGFPMRGRG…LMAYDRRGRP (80 aa)). The segment covering 252–266 (GFPMRGRGGFDRMPP) has biased composition (low complexity). Basic and acidic residues predominate over residues 276 to 285 (SRRDYDDMSP). S284 carries the phosphoserine modification. The 3-4 repeat unit spans residues 295–298 (GRGG). R316 bears the Omega-N-methylarginine mark. The stretch at 324 to 329 (DRRGRP) is one 2-2 repeat. R377 is modified (omega-N-methylarginine). S379 is modified (phosphoserine). Y380 carries the phosphotyrosine modification. In terms of domain architecture, KH 3 spans 387 to 451 (IITTQVTIPK…DQIQNAQYLL (65 aa)). Repeat copies occupy residues 399–421 (AGSIIGKGGQRIKQIRHESGASI) and 404–407 (GKGG). K405 bears the N6-acetyllysine; alternate mark. K405 participates in a covalent cross-link: Glycyl lysine isopeptide (Lys-Gly) (interchain with G-Cter in SUMO2); alternate. A Phosphoserine modification is found at S420. Residue K422 forms a Glycyl lysine isopeptide (Lys-Gly) (interchain with G-Cter in SUMO1); alternate linkage. K422 participates in a covalent cross-link: Glycyl lysine isopeptide (Lys-Gly) (interchain with G-Cter in SUMO2); alternate. K422 participates in a covalent cross-link: Glycyl lysine isopeptide (Lys-Gly) (interchain with G-Cter in SUMO); alternate.

Identified in the spliceosome C complex. Interacts with ANKRD28, RBM42 and ZIK1. Interacts with DDX1. Interacts with MDM2; this interaction leads to ubiquitination and proteasomal degradation. Interacts with p53/TP53. Interacts with BRDT. Interacts with IVNS1ABP. Interacts with PPIA/CYPA. Part of a transcription inhibitory ribonucleoprotein complex composed at least of the circular RNA circZNF827, ZNF827 and HNRNPL. Post-translationally, sumoylated by CBX4. Sumoylation is increased upon DNA damage, such as that produced by doxorubicin, etoposide, UV light and camptothecin, due to enhanced CBX4 phosphorylation by HIPK2 under these conditions. Ubiquitinated by MDM2. Doxorubicin treatment does not affect monoubiquitination, but slightly decreases HNRNPK poly-ubiquitination. In terms of processing, O-glycosylated (O-GlcNAcylated), in a cell cycle-dependent manner.

It localises to the cytoplasm. It is found in the nucleus. The protein resides in the nucleoplasm. Its subcellular location is the cell projection. The protein localises to the podosome. One of the major pre-mRNA-binding proteins. Binds tenaciously to poly(C) sequences. Likely to play a role in the nuclear metabolism of hnRNAs, particularly for pre-mRNAs that contain cytidine-rich sequences. Can also bind poly(C) single-stranded DNA. Plays an important role in p53/TP53 response to DNA damage, acting at the level of both transcription activation and repression. When sumoylated, acts as a transcriptional coactivator of p53/TP53, playing a role in p21/CDKN1A and 14-3-3 sigma/SFN induction. As far as transcription repression is concerned, acts by interacting with long intergenic RNA p21 (lincRNA-p21), a non-coding RNA induced by p53/TP53. This interaction is necessary for the induction of apoptosis, but not cell cycle arrest. As part of a ribonucleoprotein complex composed at least of ZNF827, HNRNPL and the circular RNA circZNF827 that nucleates the complex on chromatin, may negatively regulate the transcription of genes involved in neuronal differentiation. The protein is Heterogeneous nuclear ribonucleoprotein K (HNRNPK) of Bos taurus (Bovine).